The sequence spans 448 residues: F-box/FBD/LRR-repeat protein At2g04230 (448 aa).

Positions 12–64 (EDRISDLPDALLLQILSSLPTENAIATSVLSKRWRSLWTMLPKLKFDSNFNPV) constitute an F-box domain. LRR repeat units follow at residues 72–98 (PTMF…HLSF), 149–176 (ILKL…YLDQ), 177–202 (VHFK…VVHR), 204–225 (SNAD…TIED), 226–251 (LRQE…NING), 271–296 (ISNV…ILHL), and 319–345 (THER…KLTD). The region spanning 359 to 410 (KWNPPKCAPECLLFHLETFLWIGYEWQRGDEKEVATYILENARRLKKATFST) is the FBD domain.

The chain is F-box/FBD/LRR-repeat protein At2g04230 from Arabidopsis thaliana (Mouse-ear cress).